The primary structure comprises 487 residues: Transmembrane protein 161B (487 aa).

N34 carries N-linked (GlcNAc...) asparagine glycosylation. A helical transmembrane segment spans residues 107–127; the sequence is LVDFTVAATIVYLVTEVYYSF. N135 is a glycosylation site (N-linked (GlcNAc...) asparagine). A run of 2 helical transmembrane segments spans residues 136–156 and 169–189; these read ISLV…FSLT and SVCV…LIVT. Residue N203 is glycosylated (N-linked (GlcNAc...) asparagine). 5 consecutive transmembrane segments (helical) span residues 228–248, 265–285, 305–325, 367–387, and 459–479; these read FKFF…FPGL, ITQT…LLWV, LMTE…LCVL, VFYY…MLLH, and LSFL…FGLF.

Belongs to the TMEM161 family.

The protein localises to the cell membrane. Essential for maintaining normal cardiac rhythm in the developing heart and for neonatal survival. Inhibits potassium and calcium currents in the cardiomyocytes, this assists in timely action potential repolarization and thereby maintains normal cardiac rhythm. In Mus musculus (Mouse), this protein is Transmembrane protein 161B (Tmem161b).